A 635-amino-acid polypeptide reads, in one-letter code: Threonine--tRNA ligase (635 aa).

The TGS domain maps to 1 to 61; it reads MISIRLKDGS…KEDGCLELLD (61 aa). Residues 242 to 532 are catalytic; that stretch reads DHRRLGRELG…LTEHFGGAFP (291 aa). 3 residues coordinate Zn(2+): cysteine 333, histidine 384, and histidine 509.

It belongs to the class-II aminoacyl-tRNA synthetase family. In terms of assembly, homodimer. Zn(2+) is required as a cofactor.

It localises to the cytoplasm. It catalyses the reaction tRNA(Thr) + L-threonine + ATP = L-threonyl-tRNA(Thr) + AMP + diphosphate + H(+). Catalyzes the attachment of threonine to tRNA(Thr) in a two-step reaction: L-threonine is first activated by ATP to form Thr-AMP and then transferred to the acceptor end of tRNA(Thr). Also edits incorrectly charged L-seryl-tRNA(Thr). In Syntrophomonas wolfei subsp. wolfei (strain DSM 2245B / Goettingen), this protein is Threonine--tRNA ligase.